We begin with the raw amino-acid sequence, 241 residues long: ATP synthase subunit a (241 aa).

The next 5 membrane-spanning stretches (helical) occupy residues 30–50, 91–111, 128–148, 193–213, and 214–234; these read GQVF…ISLG, FIGT…LIPW, INTT…AGLS, LVVG…VMFL, and GLFT…YYIG.

This sequence belongs to the ATPase A chain family. In terms of assembly, F-type ATPases have 2 components, CF(1) - the catalytic core - and CF(0) - the membrane proton channel. CF(1) has five subunits: alpha(3), beta(3), gamma(1), delta(1), epsilon(1). CF(0) has four main subunits: a, b, b' and c.

The protein resides in the cellular thylakoid membrane. In terms of biological role, key component of the proton channel; it plays a direct role in the translocation of protons across the membrane. The polypeptide is ATP synthase subunit a (Prochlorococcus marinus (strain MIT 9515)).